Reading from the N-terminus, the 142-residue chain is Large ribosomal subunit protein uL13 (142 aa).

Belongs to the universal ribosomal protein uL13 family. In terms of assembly, part of the 50S ribosomal subunit.

Functionally, this protein is one of the early assembly proteins of the 50S ribosomal subunit, although it is not seen to bind rRNA by itself. It is important during the early stages of 50S assembly. In Xanthomonas campestris pv. campestris (strain ATCC 33913 / DSM 3586 / NCPPB 528 / LMG 568 / P 25), this protein is Large ribosomal subunit protein uL13.